We begin with the raw amino-acid sequence, 375 residues long: Putative nuclease YhcG (375 aa).

In terms of assembly, interacts with DNA processing enzymes, including the restriction complex HsdMRS, the integrases IntF and IntS, and the recombinase PinE.

Functionally, may be a nuclease involved in DNA recombination and repair. This Escherichia coli (strain K12) protein is Putative nuclease YhcG (yhcG).